The chain runs to 296 residues: Elongation factor Ts (296 aa).

The interval 81–84 is involved in Mg(2+) ion dislocation from EF-Tu; it reads TDFV.

It belongs to the EF-Ts family.

It is found in the cytoplasm. Functionally, associates with the EF-Tu.GDP complex and induces the exchange of GDP to GTP. It remains bound to the aminoacyl-tRNA.EF-Tu.GTP complex up to the GTP hydrolysis stage on the ribosome. The sequence is that of Elongation factor Ts from Ruthia magnifica subsp. Calyptogena magnifica.